Reading from the N-terminus, the 183-residue chain is Abscisic acid receptor PYL10 (183 aa).

Residues 20 to 172 form an START-like region; the sequence is HELVESQCSS…NLNSLADVTE (153 aa). Cys-27 and Cys-153 are joined by a disulfide. Abscisate is bound by residues Lys-56, 85-90, 112-118, and Glu-137; these read ATKSTE and RLKNYSS. The short motif at 81–85 is the Gate loop element; the sequence is SGLPA. The Latch loop signature appears at 111-113; it reads HRL.

It belongs to the PYR/PYL/RCAR abscisic acid intracellular receptor family. In terms of assembly, monomer. Forms heterodimer with PYL13, thus antagonizing PP2Cs-binding and ABA-independent inhibition of PP2Cs. Homodimer. Binds ABA on one subunit only. Binds to CARs protein in an ABA-independent manner, both at the plasma membrane and in the nucleus. Interacts with ABI1 and HAB1, and possibly with other PP2Cs, in an ABA-independent manner.

The protein localises to the cytoplasm. It localises to the nucleus. It is found in the cell membrane. Receptor for abscisic acid (ABA) required for ABA-mediated responses such as stomatal closure and germination inhibition. Inhibits the activity of group-A protein phosphatases type 2C (PP2Cs) in an ABA-independent manner but more efficiently when activated by ABA. Can be activated by both (-)-ABA and (+)-ABA. In Arabidopsis thaliana (Mouse-ear cress), this protein is Abscisic acid receptor PYL10 (PYL10).